We begin with the raw amino-acid sequence, 339 residues long: Delta(9)-fatty-acid desaturase fat-6 (339 aa).

Helical transmembrane passes span 52-72 (VALF…LIFE), 77-97 (TVIF…AGAH), 195-215 (YFPL…VYFW), and 219-241 (AFIA…TWCI).

Belongs to the fatty acid desaturase type 1 family. Expressed in the intestine in adult worms and in all four larval stages. Additional expression in the hypodermis in all life stages.

The protein resides in the membrane. The catalysed reaction is octadecanoyl-CoA + 2 Fe(II)-[cytochrome b5] + O2 + 2 H(+) = (9Z)-octadecenoyl-CoA + 2 Fe(III)-[cytochrome b5] + 2 H2O. It carries out the reaction hexadecanoyl-CoA + 2 Fe(II)-[cytochrome b5] + O2 + 2 H(+) = (9Z)-hexadecenoyl-CoA + 2 Fe(III)-[cytochrome b5] + 2 H2O. The enzyme catalyses heptadecanoyl-CoA + 2 Fe(II)-[cytochrome b5] + O2 + 2 H(+) = (9Z)-heptadecenoyl-CoA + 2 Fe(III)-[cytochrome b5] + 2 H2O. It catalyses the reaction (11E)-octadecenoyl-CoA + 2 Fe(II)-[cytochrome b5] + O2 + 2 H(+) = (9Z,11E)-octadecadienoyl-CoA + 2 Fe(III)-[cytochrome b5] + 2 H2O. The protein operates within lipid metabolism; monounsaturated fatty acid biosynthesis. It participates in lipid metabolism; fatty acid metabolism. Functionally, delta(9)-fatty acid desaturase that acts preferentially on stearoyl-CoA (octadecanoyl-CoA) producing the monounsaturated oleoyl-CoA ((9Z)-octadecenoyl-CoA), one of the most abundant monounsaturated fatty acid in Caenorhabditis elegans phospholipids and triacylglycerols. Also acts on palmitoyl-CoA (hexadecanoyl-CoA), heptadecanoyl-CoA and (11E)-octadecenoyl-CoA (trans-vaccenoyl-CoA), the monounsaturated fatty acids (MUFAs) produced are further used as substrates to synthesize polyunsaturated fatty acids (PUFAs) by several other desaturases and elongases. Unlike plants, Caenorhabditis elegans desaturases seem to use fatty acyl-CoAs as substrates. This chain is Delta(9)-fatty-acid desaturase fat-6 (fat-6), found in Caenorhabditis elegans.